Reading from the N-terminus, the 626-residue chain is tRNA uridine 5-carboxymethylaminomethyl modification enzyme MnmG (626 aa).

An FAD-binding site is contributed by 14 to 19 (GAGHAG). Residue 273 to 287 (GPRYCPSIEDKVVRF) participates in NAD(+) binding.

This sequence belongs to the MnmG family. As to quaternary structure, homodimer. Heterotetramer of two MnmE and two MnmG subunits. FAD serves as cofactor.

It is found in the cytoplasm. Functionally, NAD-binding protein involved in the addition of a carboxymethylaminomethyl (cmnm) group at the wobble position (U34) of certain tRNAs, forming tRNA-cmnm(5)s(2)U34. The chain is tRNA uridine 5-carboxymethylaminomethyl modification enzyme MnmG from Caldicellulosiruptor saccharolyticus (strain ATCC 43494 / DSM 8903 / Tp8T 6331).